Here is a 189-residue protein sequence, read N- to C-terminus: Phosphoheptose isomerase (189 aa).

The region spanning 34–189 (LADSLAGGRK…CDLVEKRLFP (156 aa)) is the SIS domain. A substrate-binding site is contributed by 49-51 (NGG). Residues His-58 and Glu-62 each coordinate Zn(2+). Substrate contacts are provided by residues Glu-62, 91–92 (ND), 117–119 (STS), Ser-122, and Gln-169. The Zn(2+) site is built by Gln-169 and His-177.

The protein belongs to the SIS family. GmhA subfamily. In terms of assembly, homotetramer. Zn(2+) is required as a cofactor.

Its subcellular location is the cytoplasm. It carries out the reaction 2 D-sedoheptulose 7-phosphate = D-glycero-alpha-D-manno-heptose 7-phosphate + D-glycero-beta-D-manno-heptose 7-phosphate. Its pathway is carbohydrate biosynthesis; D-glycero-D-manno-heptose 7-phosphate biosynthesis; D-glycero-alpha-D-manno-heptose 7-phosphate and D-glycero-beta-D-manno-heptose 7-phosphate from sedoheptulose 7-phosphate: step 1/1. In terms of biological role, catalyzes the isomerization of sedoheptulose 7-phosphate in D-glycero-D-manno-heptose 7-phosphate. The polypeptide is Phosphoheptose isomerase (Geobacter sulfurreducens (strain ATCC 51573 / DSM 12127 / PCA)).